We begin with the raw amino-acid sequence, 396 residues long: Chalcone synthase A (396 aa).

Cys170 is an active-site residue.

The protein belongs to the thiolase-like superfamily. Chalcone/stilbene synthases family.

It catalyses the reaction (E)-4-coumaroyl-CoA + 3 malonyl-CoA + 3 H(+) = 2',4,4',6'-tetrahydroxychalcone + 3 CO2 + 4 CoA. Its pathway is secondary metabolite biosynthesis; flavonoid biosynthesis. Its function is as follows. The primary product of this enzyme is 4,2',4',6'-tetrahydroxychalcone (also termed naringenin-chalcone or chalcone) which can under specific conditions spontaneously isomerize into naringenin. This chain is Chalcone synthase A (CHSA), found in Ipomoea purpurea (Common morning glory).